The primary structure comprises 382 residues: Nitric oxide reductase FlRd-NAD(+) reductase (382 aa).

Belongs to the FAD-dependent oxidoreductase family. It depends on FAD as a cofactor.

Its subcellular location is the cytoplasm. It catalyses the reaction 2 reduced [nitric oxide reductase rubredoxin domain] + NAD(+) + H(+) = 2 oxidized [nitric oxide reductase rubredoxin domain] + NADH. It functions in the pathway nitrogen metabolism; nitric oxide reduction. Its function is as follows. One of at least two accessory proteins for anaerobic nitric oxide (NO) reductase. Reduces the rubredoxin moiety of NO reductase. The chain is Nitric oxide reductase FlRd-NAD(+) reductase from Vibrio vulnificus (strain YJ016).